The following is a 963-amino-acid chain: Reversion-inducing cysteine-rich protein with Kazal motifs (963 aa).

The signal sequence occupies residues 1–28 (MAAAVAAWPWALFCLAAVPPLLSPGAAG). A Knot 1 repeat occupies 31 to 78 (CCYHAKDNLMCRDVCEQILSSKSDSRLKHLLQRAPEYCPESMGEVWGC). Residues 31–332 (CCYHAKDNLM…NAVEVSMLTC (302 aa)) form a 5 X Knot repeats region. N-linked (GlcNAc...) asparagine glycosylation occurs at Asn-80. Knot repeat units lie at residues 98–135 (CCEL…LFSC) and 145–191 (CCSY…LIHC). Residue Asn-194 is glycosylated (N-linked (GlcNAc...) asparagine). Knot repeat units lie at residues 210–257 (CCDR…LWQC) and 286–332 (CCSK…MLTC). 2 N-linked (GlcNAc...) asparagine glycosylation sites follow: Asn-291 and Asn-346. Kazal-like domains are found at residues 621–667 (KFTG…SCIS), 692–746 (SFGK…PCQP), and 749–783 (KSVE…HCQA). 6 cysteine pairs are disulfide-bonded: Cys-627–Cys-652, Cys-629–Cys-648, Cys-637–Cys-665, Cys-710–Cys-729, Cys-718–Cys-744, and Cys-755–Cys-781. Ser-936 carries GPI-anchor amidated serine lipidation. The propeptide occupies 937–963 (PSVKVGPVLHCLFISFSFTLLKLMDYI).

This sequence belongs to the RECK family. In terms of assembly, interacts (via knot repeats) with WNT7A (via disordered linker region); the interaction is direct. Interacts (via knot repeats) with WNT7B (via disordered linker region); the interaction is direct. Interacts with ADGRA2; the interaction is direct. Post-translationally, localizes to the plasma membrane via its GPI-anchor. Released from the plasma membrane following cleavage of the GPI-anchor by GDPD5/GPE2.

It localises to the cell membrane. Functions together with ADGRA2 to enable brain endothelial cells to selectively respond to Wnt7 signals (WNT7A or WNT7B). Plays a key role in Wnt7-specific responses: required for central nervous system (CNS) angiogenesis and blood-brain barrier regulation. Acts as a Wnt7-specific coactivator of canonical Wnt signaling by decoding Wnt ligands: acts by interacting specifically with the disordered linker region of Wnt7, thereby conferring ligand selectivity for Wnt7. ADGRA2 is then required to deliver RECK-bound Wnt7 to frizzled by assembling a higher-order RECK-ADGRA2-Fzd-LRP5-LRP6 complex. Also acts as a serine protease inhibitor. The chain is Reversion-inducing cysteine-rich protein with Kazal motifs from Gallus gallus (Chicken).